We begin with the raw amino-acid sequence, 228 residues long: ATP-dependent dethiobiotin synthetase BioD (228 aa).

12 to 17 (EIGKTT) provides a ligand contact to ATP. T16 lines the Mg(2+) pocket. K37 is an active-site residue. Residue S41 participates in substrate binding. Residues D54, 116–119 (EGAG), and 205–207 (PRL) contribute to the ATP site. Residues D54 and E116 each coordinate Mg(2+).

It belongs to the dethiobiotin synthetase family. As to quaternary structure, homodimer. It depends on Mg(2+) as a cofactor.

It is found in the cytoplasm. The enzyme catalyses (7R,8S)-7,8-diammoniononanoate + CO2 + ATP = (4R,5S)-dethiobiotin + ADP + phosphate + 3 H(+). The protein operates within cofactor biosynthesis; biotin biosynthesis; biotin from 7,8-diaminononanoate: step 1/2. In terms of biological role, catalyzes a mechanistically unusual reaction, the ATP-dependent insertion of CO2 between the N7 and N8 nitrogen atoms of 7,8-diaminopelargonic acid (DAPA, also called 7,8-diammoniononanoate) to form a ureido ring. The protein is ATP-dependent dethiobiotin synthetase BioD of Pseudomonas aeruginosa (strain LESB58).